Here is a 152-residue protein sequence, read N- to C-terminus: MDARRMKKEEGLTENTGLPRKLLEKHDPWPAYVTYTSQTVKRLIEKSKTRELECMRALEERPWASRQNKPSSVIQPKRRKSSKSSGKAVFRDTLSESTLSMWGAYSVLAMAPTMIPEPTHLHADSRDCPTENYNKIIFARKPMMRMLPTVRY.

The span at 1–11 (MDARRMKKEEG) shows a compositional bias: basic and acidic residues. Disordered regions lie at residues 1–23 (MDARRMKKEEGLTENTGLPRKLL) and 60–89 (ERPWASRQNKPSSVIQPKRRKSSKSSGKAV). A compositionally biased stretch (polar residues) spans 65-74 (SRQNKPSSVI).

In terms of tissue distribution, expressed in fetal skeletal muscle and kidney.

The sequence is that of CMT1A duplicated region transcript 4 protein (CDRT4) from Homo sapiens (Human).